The chain runs to 207 residues: N-(5'-phosphoribosyl)anthranilate isomerase (207 aa).

Belongs to the TrpF family.

It catalyses the reaction N-(5-phospho-beta-D-ribosyl)anthranilate = 1-(2-carboxyphenylamino)-1-deoxy-D-ribulose 5-phosphate. It functions in the pathway amino-acid biosynthesis; L-tryptophan biosynthesis; L-tryptophan from chorismate: step 3/5. The protein is N-(5'-phosphoribosyl)anthranilate isomerase of Staphylococcus epidermidis (strain ATCC 35984 / DSM 28319 / BCRC 17069 / CCUG 31568 / BM 3577 / RP62A).